Reading from the N-terminus, the 267-residue chain is MEMO1 family protein MA_0601 (267 aa).

The protein belongs to the MEMO1 family.

The polypeptide is MEMO1 family protein MA_0601 (Methanosarcina acetivorans (strain ATCC 35395 / DSM 2834 / JCM 12185 / C2A)).